Reading from the N-terminus, the 232-residue chain is uncharacterized protein (232 aa).

5 helical membrane-spanning segments follow: residues 69-91 (LISAIITMVLFSLLTPLMFYILF), 104-126 (FLEPTIYFILFLFGLHACIFFAL), 139-161 (FSRFGAFLIPFTAILILALFFFL), 166-188 (ICFTILAVGLIGAFFAIPPAMLS), and 200-219 (FIYSTIVIYLIICVTFQLII).

It localises to the cell membrane. This is an uncharacterized protein from Bacillus subtilis (strain 168).